We begin with the raw amino-acid sequence, 208 residues long: Uracil phosphoribosyltransferase (208 aa).

5-phospho-alpha-D-ribose 1-diphosphate contacts are provided by residues Arg-78, Arg-103, and 130–138; that span reads DPMLATGGS. Uracil-binding positions include Ile-193 and 198–200; that span reads GDA. Asp-199 contributes to the 5-phospho-alpha-D-ribose 1-diphosphate binding site.

Belongs to the UPRTase family. It depends on Mg(2+) as a cofactor.

It catalyses the reaction UMP + diphosphate = 5-phospho-alpha-D-ribose 1-diphosphate + uracil. It functions in the pathway pyrimidine metabolism; UMP biosynthesis via salvage pathway; UMP from uracil: step 1/1. Allosterically activated by GTP. Catalyzes the conversion of uracil and 5-phospho-alpha-D-ribose 1-diphosphate (PRPP) to UMP and diphosphate. In Acholeplasma laidlawii (strain PG-8A), this protein is Uracil phosphoribosyltransferase.